The sequence spans 259 residues: Enolase-phosphatase E1 (259 aa).

Positions 16 and 18 each coordinate Mg(2+). Residues 151–152 (SS) and K185 each bind substrate. Residue D210 coordinates Mg(2+).

The protein belongs to the HAD-like hydrolase superfamily. MasA/MtnC family. In terms of assembly, monomer. The cofactor is Mg(2+).

Its subcellular location is the cytoplasm. It is found in the nucleus. The enzyme catalyses 5-methylsulfanyl-2,3-dioxopentyl phosphate + H2O = 1,2-dihydroxy-5-(methylsulfanyl)pent-1-en-3-one + phosphate. The protein operates within amino-acid biosynthesis; L-methionine biosynthesis via salvage pathway; L-methionine from S-methyl-5-thio-alpha-D-ribose 1-phosphate: step 3/6. It participates in amino-acid biosynthesis; L-methionine biosynthesis via salvage pathway; L-methionine from S-methyl-5-thio-alpha-D-ribose 1-phosphate: step 4/6. In terms of biological role, bifunctional enzyme that catalyzes the enolization of 2,3-diketo-5-methylthiopentyl-1-phosphate (DK-MTP-1-P) into the intermediate 2-hydroxy-3-keto-5-methylthiopentenyl-1-phosphate (HK-MTPenyl-1-P), which is then dephosphorylated to form the acireductone 1,2-dihydroxy-3-keto-5-methylthiopentene (DHK-MTPene). The sequence is that of Enolase-phosphatase E1 (enoph1) from Xenopus tropicalis (Western clawed frog).